A 324-amino-acid chain; its full sequence is uncharacterized protein (324 aa).

A compositionally biased stretch (polar residues) spans 1–11 (MNTNINVNGSN). 3 disordered regions span residues 1-77 (MNTN…YSYS), 132-194 (NNHY…NNNN), and 272-324 (DENI…DNDS). Positions 21–64 (NENNNNNNGRNNNTNNNNNGRYNNNNNNNNNNNNNNYNLNMNST) are enriched in low complexity. Residues 279–324 (SNNNNNNNNNNNNSYNVNICRNNSNFNVNENNGGDNNNDNNNDNDS) show a composition bias toward low complexity.

This is an uncharacterized protein from Dictyostelium discoideum (Social amoeba).